The chain runs to 176 residues: Putative ribosomal protein eS10-like (176 aa).

The interval 104-176 is disordered; that stretch reads TLHRSRPETG…CGRGRGQPPQ (73 aa). The span at 108–139 shows a compositional bias: basic and acidic residues; sequence SRPETGRPRPKGLEGKRPARLTRREADRDTYR.

Belongs to the eukaryotic ribosomal protein eS10 family.

This Homo sapiens (Human) protein is Putative ribosomal protein eS10-like (RPS10P5).